Here is a 906-residue protein sequence, read N- to C-terminus: Kinesin-like protein KIN-7G (906 aa).

A Kinesin motor domain is found at 26-344 (SVAVAVRFRP…LKFAHRAKHI (319 aa)). 105-112 (GVTSSGKT) contacts ATP. Coiled-coil stretches lie at residues 346 to 385 (IQAT…RTGT), 733 to 814 (SDEF…GRNQ), and 839 to 875 (GDMN…LEKE). Residues 803-840 (RLSSELASGRNQRRGSHGPRGARRESHTKRYEPARRGD) are disordered. Residues 813 to 823 (NQRRGSHGPRG) are compositionally biased toward basic residues. Positions 824-840 (ARRESHTKRYEPARRGD) are enriched in basic and acidic residues.

Belongs to the TRAFAC class myosin-kinesin ATPase superfamily. Kinesin family. KIN-7 subfamily.

The chain is Kinesin-like protein KIN-7G from Oryza sativa subsp. japonica (Rice).